A 676-amino-acid polypeptide reads, in one-letter code: Maternal embryonic leucine zipper kinase (676 aa).

Residues Tyr-13–Val-265 form the Protein kinase domain. ATP-binding positions include Ile-19–Val-27 and Lys-42. The active-site Proton acceptor is the Asp-134. Position 169 is a phosphothreonine; by autocatalysis (Thr-169). The residue at position 173 (Ser-173) is a Phosphoserine; by autocatalysis. Positions Ile-284–Leu-323 are UBA-like. The autoinhibitory region stretch occupies residues Gln-328 to Gln-673. The segment covering Glu-423–Glu-443 has biased composition (basic and acidic residues). The segment at Glu-423 to Asn-518 is disordered. Over residues Thr-462–Val-489 the composition is skewed to polar residues. Over residues Gln-508 to Asn-518 the composition is skewed to low complexity. In terms of domain architecture, KA1 spans Ser-624–Gln-673.

It belongs to the protein kinase superfamily. CAMK Ser/Thr protein kinase family. SNF1 subfamily. Post-translationally, autophosphorylated: autophosphorylation of the T-loop at Thr-169 and Ser-173 is required for activation. As to expression, strongly expressed in the eye, gill, kidney, spleen, muscle, ovary and testis and weakly in the heart, liver, and gut. Expressed in the brain and lateral mesoderm at 12 hours post-fertilization (hpf).

Its subcellular location is the cell membrane. It carries out the reaction L-seryl-[protein] + ATP = O-phospho-L-seryl-[protein] + ADP + H(+). The enzyme catalyses L-threonyl-[protein] + ATP = O-phospho-L-threonyl-[protein] + ADP + H(+). Its activity is regulated as follows. Activated by autophosphorylation of the T-loop at Thr-169 and Ser-173: in contrast to other members of the SNF1 subfamily, phosphorylation at Thr-169 is not mediated by STK11/LKB1 but via autophosphorylation instead. In terms of biological role, serine/threonine-protein kinase involved in various processes such as cell cycle regulation, self-renewal of stem cells, apoptosis and splicing regulation. Also plays a role in primitive hematopoiesis, possibly by affecting the expression of genes critical for hematopoiesis. This chain is Maternal embryonic leucine zipper kinase (melk), found in Danio rerio (Zebrafish).